A 557-amino-acid polypeptide reads, in one-letter code: Dihydroxy-acid dehydratase (557 aa).

A Mg(2+)-binding site is contributed by aspartate 78. Cysteine 119 contributes to the [2Fe-2S] cluster binding site. Mg(2+)-binding residues include aspartate 120 and lysine 121. Lysine 121 is modified (N6-carboxylysine). Residue cysteine 192 coordinates [2Fe-2S] cluster. Position 442 (glutamate 442) interacts with Mg(2+). Serine 468 functions as the Proton acceptor in the catalytic mechanism.

It belongs to the IlvD/Edd family. As to quaternary structure, homodimer. It depends on [2Fe-2S] cluster as a cofactor. Mg(2+) is required as a cofactor.

It carries out the reaction (2R)-2,3-dihydroxy-3-methylbutanoate = 3-methyl-2-oxobutanoate + H2O. The catalysed reaction is (2R,3R)-2,3-dihydroxy-3-methylpentanoate = (S)-3-methyl-2-oxopentanoate + H2O. It participates in amino-acid biosynthesis; L-isoleucine biosynthesis; L-isoleucine from 2-oxobutanoate: step 3/4. The protein operates within amino-acid biosynthesis; L-valine biosynthesis; L-valine from pyruvate: step 3/4. In terms of biological role, functions in the biosynthesis of branched-chain amino acids. Catalyzes the dehydration of (2R,3R)-2,3-dihydroxy-3-methylpentanoate (2,3-dihydroxy-3-methylvalerate) into 2-oxo-3-methylpentanoate (2-oxo-3-methylvalerate) and of (2R)-2,3-dihydroxy-3-methylbutanoate (2,3-dihydroxyisovalerate) into 2-oxo-3-methylbutanoate (2-oxoisovalerate), the penultimate precursor to L-isoleucine and L-valine, respectively. This is Dihydroxy-acid dehydratase from Bacillus cereus (strain AH820).